Here is a 320-residue protein sequence, read N- to C-terminus: tRNA N6-adenosine threonylcarbamoyltransferase (320 aa).

Residues His114 and His118 each contribute to the Fe cation site. Residues 136–140 (VVSGG), Asp169, Gly182, Asp186, and Asn273 contribute to the substrate site. Position 297 (Asp297) interacts with Fe cation.

It belongs to the KAE1 / TsaD family. Requires Fe(2+) as cofactor.

It is found in the cytoplasm. The enzyme catalyses L-threonylcarbamoyladenylate + adenosine(37) in tRNA = N(6)-L-threonylcarbamoyladenosine(37) in tRNA + AMP + H(+). Functionally, required for the formation of a threonylcarbamoyl group on adenosine at position 37 (t(6)A37) in tRNAs that read codons beginning with adenine. Is involved in the transfer of the threonylcarbamoyl moiety of threonylcarbamoyl-AMP (TC-AMP) to the N6 group of A37, together with TsaE and TsaB. TsaD likely plays a direct catalytic role in this reaction. The polypeptide is tRNA N6-adenosine threonylcarbamoyltransferase (Ureaplasma parvum serovar 3 (strain ATCC 27815 / 27 / NCTC 11736)).